We begin with the raw amino-acid sequence, 137 residues long: ATP synthase epsilon chain (137 aa).

Belongs to the ATPase epsilon chain family. In terms of assembly, F-type ATPases have 2 components, CF(1) - the catalytic core - and CF(0) - the membrane proton channel. CF(1) has five subunits: alpha(3), beta(3), gamma(1), delta(1), epsilon(1). CF(0) has three main subunits: a, b and c.

Its subcellular location is the cell membrane. Produces ATP from ADP in the presence of a proton gradient across the membrane. The polypeptide is ATP synthase epsilon chain (Syntrophomonas wolfei subsp. wolfei (strain DSM 2245B / Goettingen)).